The following is a 296-amino-acid chain: Acetylglutamate kinase (296 aa).

Residues 68-69 (GG), Arg90, and Asn195 contribute to the substrate site.

It belongs to the acetylglutamate kinase family. ArgB subfamily.

It is found in the cytoplasm. It catalyses the reaction N-acetyl-L-glutamate + ATP = N-acetyl-L-glutamyl 5-phosphate + ADP. It participates in amino-acid biosynthesis; L-arginine biosynthesis; N(2)-acetyl-L-ornithine from L-glutamate: step 2/4. In terms of biological role, catalyzes the ATP-dependent phosphorylation of N-acetyl-L-glutamate. The sequence is that of Acetylglutamate kinase from Desulfotalea psychrophila (strain LSv54 / DSM 12343).